A 656-amino-acid chain; its full sequence is MFQNNPLLSQLKKQIQEDIPKRQGKVKATDRGYGFLETDKGKRFFIPPSEMKKVLHGDQINAFIRGKGDKSTAEPNQLKKTGSAVFIARLVIKQKNISIIPKNPLLKGFFKIKGSQSLQSRGYQDGDWVKVELVSHALEGNGFLTQIIEKIADASDPFAYRLLTVATHNLANKAPEFDHPWKIIDPQLSRSDLTKTPFFTIDGVNTQDMDDALYIEADENGWKLTVAISDPSAYVPENSDMDAEAKRRAFTLYLPNFNVPMLPRDLSDSLCSLKEGEKRATLCCTIHINKKGEIEGEPAFYGAWIKSHYRLNYTDVSNYLENEELSNDCWKPSTQLAEQLRTLDSLSLKRLQWRTDNNAVFKNQPDYTLKLNNKGEISEILCEPRRSANRLVEESMIAANICAGDFLAKHKQQGVFNTHSGFSSERLGKVVSLLSEFGIESDIQTLATVTGYTKIRQQTNLLHNSYLDHRLRKLLSYADIKNTPEAHFTLGVDHYATWTSPIRKYGDLLNHRLIKSVLLKEDNIQIDNEIGQVLNAARKLQRLAERDVNNILYSQYLKNQVESKWRYKAEIFDIIKAGIRVKIQENGATFFIPCSLLCKDSSDATKIDCNQALGKVIIAQQTELQLGDVIDVMLNNVKVESGQLIGKLAESLTISE.

The RNB domain maps to 190–518; the sequence is RSDLTKTPFF…LNHRLIKSVL (329 aa). Residues 564-649 form the S1 motif domain; the sequence is KWRYKAEIFD…ESGQLIGKLA (86 aa).

Belongs to the RNR ribonuclease family. RNase II subfamily.

It is found in the cytoplasm. The catalysed reaction is Exonucleolytic cleavage in the 3'- to 5'-direction to yield nucleoside 5'-phosphates.. Functionally, involved in mRNA degradation. Hydrolyzes single-stranded polyribonucleotides processively in the 3' to 5' direction. The sequence is that of Exoribonuclease 2 from Psychromonas ingrahamii (strain DSM 17664 / CCUG 51855 / 37).